The primary structure comprises 229 residues: Large ribosomal subunit protein uL1 (229 aa).

It belongs to the universal ribosomal protein uL1 family. Part of the 50S ribosomal subunit.

In terms of biological role, binds directly to 23S rRNA. The L1 stalk is quite mobile in the ribosome, and is involved in E site tRNA release. Functionally, protein L1 is also a translational repressor protein, it controls the translation of the L11 operon by binding to its mRNA. The sequence is that of Large ribosomal subunit protein uL1 from Streptococcus pyogenes serotype M1.